The primary structure comprises 1413 residues: MELMFAEWEDGERFSFEDSDRFEEDSLCSFISEAESLCQNWRGWRKQSAGPNSPTGGGGGGGSGGTRMRDGLVIPLVELSAKQVAFHIPFEVVEKVYPPVPEQLQLRIAFWSFPENEEDIRLYSCLANGSADEFQRGDQLFRMRAVKDPLQIGFHLSATVVPPQMVPPKGAYNVAVMFDRCRVTSCSCTCGAGAKWCTHVVALCLFRIHNASAVCLRAPVSESLSRLQRDQLQKFAQYLISELPQQILPTAQRLLDELLSSQSTAINTVCGAPDPTAGPSASDQSTWYLDESTLTDNIKKTLHKFCGPSPVVFSDVNSMYLSSTEPPAAAEWACLLRPLRGREPEGVWNLLSIVREMFKRRDSNAAPLLEILTVELAQDLLANPPDLKVEPPPAKGKKNKVSTSRQTWVATNTLTKAAFLLTVLSERPEHHNLAFRVGMFALELQRPPASTKALEVKLAYQESEVATLLKKIPLGPSEMSTVRCRAEELREGTLCDYRPVLPLMLASFIFDVLCAPVVSPTGSRPPSRNWNNEMPGDEELGFEAAVAALGMKTTVSEAEHPLLCEGTRREKGDLALALMITYKDDQARLKKILDKLLDRESQTHKPQTLSSFYSSSRPATASQRSPSKHGGPSAPGALQPLTSGSAGPAQPGSVAGAGPGPTEGFTEKNVPESSPHSPCEGLPPEAALTPRPEGKVPSRLALGSRGGYNGRGWGSPGRPKKKHTGMASIDSSAPETTSDSSPTLSRRPLRGGWAPTSWGRGQDSDSISSSSSDSLGSSSSSGSRRASASGGARAKTVEVGRYKGRRPESHAPHVPNQPSEAAAHFYFELAKTVLIKAGGNSSTSIFTHPSSSGGHQGPHRNLHLCAFEIGLYALGLHNFVSPNWLSRTYSSHVSWITGQAMEIGSAALTILVECWDGHLTPPEVASLADRASRARDSNMVRAAAELALSCLPHAHALNPNEIQRALVQCKEQDNLMLEKACMAVEEAAKGGGVYPEVLFEVAHQWFWLYEQTAGGSSTAREGATSCSASGIRAAGEAGRGLPEGRGGPGTEPVTVAAAAVTAATVVPVISVGSSLYPGPGLGHGHSPGLHPYTALQPHLPCSPQYLTHPAHPAHPMPHMPRPAVFPVASSAYPQGVHPAFLGAQYPYSVTPPSLAATAVSFPVPSMAPITVHPYHTEPGLPLPTSVALSSVHPASTFPAIQGASLPALTTQPSPLVSGGFPPPEEETHSQPVNPHSLHHLHAAYRVGMLALEMLGRRAHNDHPNNFSRSPPYTDDVKWLLGLAAKLGVNYVHQFCVGAAKGVLSPFVLQEIVMETLQRLSPAHAHNHLRAPAFHQLVQRCQQAYMQYIHHRLIHLTPADYDDFVNAIRSARSAFCLTPMGMMQFNDILQNLKRSKQTKELWQRVSLEMTTFSP.

Phosphoserine occurs at positions 36, 48, and 53. The segment at 45 to 65 (RKQSAGPNSPTGGGGGGGSGG) is disordered. Residues 55-65 (TGGGGGGGSGG) show a composition bias toward gly residues. An SWIM-type zinc finger spans residues 172 to 208 (YNVAVMFDRCRVTSCSCTCGAGAKWCTHVVALCLFRI). Residues 600 to 817 (ESQTHKPQTL…ESHAPHVPNQ (218 aa)) form a disordered region. Residues 604–625 (HKPQTLSSFYSSSRPATASQRS) show a composition bias toward polar residues. The segment covering 704–715 (SRGGYNGRGWGS) has biased composition (gly residues). The residue at position 724 (Thr724) is a Phosphothreonine. The segment covering 729 to 744 (IDSSAPETTSDSSPTL) has biased composition (polar residues). A phosphoserine mark is found at Ser738, Ser741, and Ser745. Residues 759–794 (GRGQDSDSISSSSSDSLGSSSSSGSRRASASGGARA) show a composition bias toward low complexity. Positions 795 to 811 (KTVEVGRYKGRRPESHA) are enriched in basic and acidic residues. Residues Ser852 and Ser1412 each carry the phosphoserine modification.

It belongs to the ZSWIM8 family. In terms of assembly, component of the SCF-like E3 ubiquitin-protein ligase complex which contains CUL3, RBX1, ELOB, ELOC and ZSWIM8. Interacts with DAB1.

It localises to the cytoplasm. Its subcellular location is the cytosol. The protein operates within protein modification; protein ubiquitination. Functionally, substrate recognition component of a SCF-like E3 ubiquitin-protein ligase complex that promotes target-directed microRNA degradation (TDMD), a process that mediates degradation of microRNAs (miRNAs). The SCF-like E3 ubiquitin-protein ligase complex acts by catalyzing ubiquitination and subsequent degradation of AGO proteins (AGO1, AGO2, AGO3 and/or AGO4), thereby exposing miRNAs for degradation. Specifically recognizes and binds AGO proteins when they are engaged with a TDMD target. May also acts as a regulator of axon guidance: specifically recognizes misfolded ROBO3 and promotes its ubiquitination and subsequent degradation. Plays an essential role for proper embryonic development of heart and lung. Controls protein quality of DAB1, a key signal molecule for brain development, thus protecting its signaling strength. Mechanistically, recognizes intrinsically disordered regions of DAB1 and eliminates misfolded DAB1 that cannot be properly phosphorylated. This is Zinc finger SWIM domain-containing protein 8 from Bos taurus (Bovine).